A 499-amino-acid chain; its full sequence is Lysine--tRNA ligase (499 aa).

Mg(2+) contacts are provided by Glu408 and Glu415.

This sequence belongs to the class-II aminoacyl-tRNA synthetase family. Homodimer. The cofactor is Mg(2+).

It is found in the cytoplasm. It carries out the reaction tRNA(Lys) + L-lysine + ATP = L-lysyl-tRNA(Lys) + AMP + diphosphate. This Thermoanaerobacter pseudethanolicus (strain ATCC 33223 / 39E) (Clostridium thermohydrosulfuricum) protein is Lysine--tRNA ligase.